The chain runs to 189 residues: Transcription factor FapR (189 aa).

It belongs to the FapR family.

Functionally, transcriptional factor involved in regulation of membrane lipid biosynthesis by repressing genes involved in fatty acid and phospholipid metabolism. This is Transcription factor FapR from Exiguobacterium sibiricum (strain DSM 17290 / CCUG 55495 / CIP 109462 / JCM 13490 / 255-15).